Reading from the N-terminus, the 193-residue chain is Potassium-transporting ATPase KdpC subunit (193 aa).

Residues 7-27 traverse the membrane as a helical segment; sequence PALVLFAALTLLTGVAYPLAV.

It belongs to the KdpC family. The system is composed of three essential subunits: KdpA, KdpB and KdpC.

Its subcellular location is the cell inner membrane. Functionally, part of the high-affinity ATP-driven potassium transport (or Kdp) system, which catalyzes the hydrolysis of ATP coupled with the electrogenic transport of potassium into the cytoplasm. This subunit acts as a catalytic chaperone that increases the ATP-binding affinity of the ATP-hydrolyzing subunit KdpB by the formation of a transient KdpB/KdpC/ATP ternary complex. This is Potassium-transporting ATPase KdpC subunit from Rhodospirillum rubrum (strain ATCC 11170 / ATH 1.1.1 / DSM 467 / LMG 4362 / NCIMB 8255 / S1).